Here is a 44-residue protein sequence, read N- to C-terminus: Antimicrobial peptide 1b (44 aa).

The Chitin-binding type-1 domain maps to 1–42 (AQKCGEQGRGAKCPNCLCCGRYGFCGSTPDYCGVGCQSQCRG). Disulfide bonds link cysteine 4-cysteine 19, cysteine 13-cysteine 25, cysteine 16-cysteine 43, cysteine 18-cysteine 32, and cysteine 36-cysteine 40.

In terms of processing, contains 5 disulfide bonds.

Functionally, binds chitin. Has antifungal activity against F.oxysporum 16/10 (IC(50)=4.1 uM) and B.sorokiniana 6/10 (IC(50)=2.7 uM). Inhibits germination of fungal spores. The chain is Antimicrobial peptide 1b from Leymus arenarius (Lyme grass).